The chain runs to 421 residues: MTEKLLQMMQEKGYFNQHKKVLVAVSGGADSMSLLHFLYNHQKDLDIQLGIAHVNHKQRQESEYEENYLRHWAKEHKVPFHYSAFSGKFSENAARTFRYDFFKRIMKEADYSALVTAHHADDQAETIFMRLLRGSRLRHLSGICDVRSFGTGQIIRPFLHIPKDQLPVTFHFEDRSNSSLAYLRNRIRLTYLPTLSQENPKFKEHLCLLADEIALMDKALEELTKDITITDLSVFQQQTDAVQHLLIQSYLESFPDLQLSKGQFNQLMSFLRKKTSGKMPLKNGYVLVKTQTDFLITKEEPISLSSPSLLEFGKSIVFEEYLLTFSEPHVVSNVDTINIWSDAPIVIRHRHEGDRIDLGTHHKKIRRLFIDNKISEKDRQKAIIGEQDGQIIFLYVAGRLYLKKRPKNAILYGTVVIYKKF.

26–31 (SGGADS) is a binding site for ATP.

This sequence belongs to the tRNA(Ile)-lysidine synthase family.

Its subcellular location is the cytoplasm. The enzyme catalyses cytidine(34) in tRNA(Ile2) + L-lysine + ATP = lysidine(34) in tRNA(Ile2) + AMP + diphosphate + H(+). Its function is as follows. Ligates lysine onto the cytidine present at position 34 of the AUA codon-specific tRNA(Ile) that contains the anticodon CAU, in an ATP-dependent manner. Cytidine is converted to lysidine, thus changing the amino acid specificity of the tRNA from methionine to isoleucine. The sequence is that of tRNA(Ile)-lysidine synthase from Streptococcus thermophilus (strain CNRZ 1066).